Reading from the N-terminus, the 184-residue chain is Spiro-conjugate synthase (184 aa).

The cysteines at positions 57 and 184 are disulfide-linked. Q115 provides a ligand contact to (1S,3R,6R,8R,9R,11R,14S,15S,19R,20R)-8-ethyl-9,15-dihydroxy-3,4,6,20-tetramethyl-21,23-dioxo-24-azapentacyclo[20.2.1.0(1,6).0(11,20).0(14,19)]pentacosa-4,12,22(25)-trien-25-olate.

Homodimer.

The enzyme catalyses 4-[(1R,2R,4aS,5S,8aR)-2-[(2R,3R,5E,7E)-3-ethyl-2-hydroxy-5,7-dimethylnona-5,7-dien-1-yl]-5-hydroxy-1-methyl-1,2,4a,5,6,7,8,8a-octahydronaphthalene-1-carbonyl]-2-methylidene-5-oxo-2,5-dihydro-1H-pyrrol-3-olate = (1S,3R,6R,8R,9R,11R,14S,15S,19R,20R)-8-ethyl-9,15-dihydroxy-3,4,6,20-tetramethyl-21,23-dioxo-24-azapentacyclo[20.2.1.0(1,6).0(11,20).0(14,19)]pentacosa-4,12,22(25)-trien-25-olate. It participates in antibiotic biosynthesis. Its function is as follows. Involved in the biosynthesis of the spirotetramate antibiotics pyrroindomycins. Catalyzes the intramolecular cyclization forming the spiro-conjugate moiety in pyrroindomycins, via an exo-selective [4+2] cycloaddition reaction. The polypeptide is Spiro-conjugate synthase (Streptomyces rugosporus).